Reading from the N-terminus, the 449-residue chain is Elongation factor 1-alpha 1 (449 aa).

Residues 5–230 form the tr-type G domain; sequence KVHMNLVVVG…DMLEPPVRPS (226 aa). Residues 14 to 21 form a G1 region; the sequence is GHVDAGKS. 14–21 serves as a coordination point for GTP; sequence GHVDAGKS. Residues 70–74 are G2; it reads GITID. The tract at residues 91–94 is G3; sequence DAPG. GTP contacts are provided by residues 91-95 and 153-156; these read DAPGH and NKMD. Residues 153–156 form a G4 region; it reads NKMD. The tract at residues 194–196 is G5; the sequence is SGW. At Glu362 the chain carries 5-glutamyl glycerylphosphorylethanolamine.

It belongs to the TRAFAC class translation factor GTPase superfamily. Classic translation factor GTPase family. EF-Tu/EF-1A subfamily. In terms of processing, phosphatidylethanolamine (PE) is a direct precursor of the ethanolamine-phosphoglycerol (EPG) moiety.

The protein resides in the cytoplasm. Functionally, this protein promotes the GTP-dependent binding of aminoacyl-tRNA to the A-site of ribosomes during protein biosynthesis. The protein is Elongation factor 1-alpha 1 (TEF1) of Trypanosoma brucei brucei (strain 927/4 GUTat10.1).